Here is a 228-residue protein sequence, read N- to C-terminus: Histidine/lysine/arginine/ornithine transport system permease protein HisQ (228 aa).

The Periplasmic portion of the chain corresponds to 1–12 (MLYGFSGVILQG). The helical transmembrane segment at 13-33 (AIVTLELALSSVVLAVLIGLV) threads the bilayer. The 200-residue stretch at 13-212 (AIVTLELALS…VFTTVSNGVL (200 aa)) folds into the ABC transmembrane type-1 domain. At 34–58 (GAGAKLSQNRVTGLIFEGYTTLIRG) the chain is on the cytoplasmic side. Residues 59–79 (VPDLVLMLLIFYGLQIALNVV) traverse the membrane as a helical segment. Over 80 to 87 (TDSLGIDQ) the chain is Periplasmic. The helical transmembrane segment at 88 to 108 (IDIDPMVAGIITLGFIYGAYF) threads the bilayer. The Cytoplasmic segment spans residues 109-152 (TETFRGAFMAVPKGHIEAATAFGFTHGQTFRRIMFPAMMRYALP). The chain crosses the membrane as a helical span at residues 153–173 (GIGNNWQVILKATALVSLLGL). Topologically, residues 174–194 (EDVVKATQLAGKSTWEPFYFA) are periplasmic. The chain crosses the membrane as a helical span at residues 195 to 215 (VVCGLIYLVFTTVSNGVLLLL). At 216–228 (ERRYSVGVKRADL) the chain is on the cytoplasmic side.

The protein belongs to the binding-protein-dependent transport system permease family. HisMQ subfamily. The HisPMQJ complex is composed of two ATP-binding proteins (HisP), two transmembrane proteins (HisM and HisQ) and a solute-binding protein (HisJ). The HisPMQ-ArgT complex is composed of two ATP-binding proteins (HisP), two transmembrane proteins (HisM and HisQ) and a solute-binding protein (ArgT).

The protein localises to the cell inner membrane. In terms of biological role, part of the ABC transporter complex HisPMQJ involved in histidine transport. Is also part of the ABC transporter complex HisPMQ-ArgT involved in lysine/arginine/ornithine transport. Probably responsible for the translocation of the substrate across the membrane. The polypeptide is Histidine/lysine/arginine/ornithine transport system permease protein HisQ (hisQ) (Salmonella typhi).